The primary structure comprises 1746 residues: MSDNSGSGTSPWGSLNTPVGPPKVTLAYFSNEFPPDDLNFIVRKLFDRTSKGPFCSIDGVLLCAIQFANLIGHYETTDHLFPFGSSIASVAGLGIGLVAAAAVSVTPSLADLPVAGAEAVRIAFRLGVLVDGVSQNLQPRDRSTTGTPDSWAYVIPDVSPEVVQKELDEIHSREKTPIPSKIFVSALSRTSVTISGPPARLRSLFRLSDFFRDRKFVALPVYGGLCHAGHIYEQRHVQEVVEKSVLDETHVRYSPSVRLFSTSTGKPFLSTSVTNLFEQVVGEILTQKIQWDKVVKGVLERIQELSATEVEVLVFRDSLPVHELVKALKSADSGLQTTTEDLLQWLHQSRERLQGPRGSLQSKIAIVGMSCRMPSGATDTEKFWELLEKGLDVHRKIPADRFDVETHHDPTGKRVNTSITPYGCFIDEPGLFDAGFFNMSPREAQQTDPMQRLALVTAYEALERAGYVANRTSATNLHRIGTFYGQASDDYREVNTAQEISTYFIPGGCRAFGPGRINYFFKFSGPSYSIDTACSSSLATIQAACTSLWNGDTDTVVAGGMNVLTNSDAFAGLGNGHFLSKTPNACKTWDCEADGYCRADGIGSIVMKRLEDAEADNDNILGVILGAGTNHSADAISITHPHAPSQAFLYRQILRDAALDPFDVSFVEMHGTGTQAGDSEEMQSVTEVFAPIANKRRTSKQPLHIGAVKSNVGHGEAVAGVTALIKVLLMFQKEAIPPHAGIKNSINPGFPKDLDKRNINIPYQKTAWPRSTDRKRIAVVNNFSAAGGNTTIAIEEGPLRQTIGHDPRTTHLIPISAKSKVSLKGNIQRLIDYLEVSPDVSLADLSYSLTARRYHHSHRVAITTSDVAHLKKQLRSQLDSADSHKPIVAAAGPPPVAFAFTGQGASYGTMDLELYHESKYFRDQILQLDSFAQGQGFPSFVPAIDGSFPKEHTHRPVVTQLALLCTEIALAKYWASLGVKPDVVIGHSLGEYAALHVAGVLSASDAIFLVGQRALMLEKKCQAGSHKMLAVRASLAQVQEAAGELPYEVACINGQKDTVLSAAKDDIDKLASVLESAGYKCFSLDVAFAFHSAQTDPILDDFESVSRTGVLFQAPNLPVISPLLGKVVFNDKTINANYVRRATRESVDFLSALEAAQKISIIDESTTWIEIGPHPVCMGFIRSAVPSIKVASPSIRRGENNWQTLVQTLGALHLAGIPVDWNEYHRPFEQALRLLDLPTYSWNDKTYWIQYNGDWALTKGNTFYDAEKAAKAPRVGGDLPPSPISTSTVHRVIGETFDGTAGTVDIQSDLMQQDFHDAAYGHKMNNCGVVTSSIHADIVYTIGRYLHTKLKPGVKDIHMNISNLEVVKGLVAQKNRDVPQLIQVSISTEDISSGTAQVTWFNVLPDGGLDEPFATATLFYGKANDWLQSWIPTTHLVLGRVHELERLAEQGVANRFSRNMAYGLFARNLVDYADKYRGMQSVVLHGLEAFADVELTKEKGGTWTVPPFFIDSVAHLAGFIMNVSDAVDTANNFCVTPGWESMRFARPLLAGARYRSYVKMIPTEEDAGVFLGDVYIFQDNKIIGQVRGIKFRRYPRLLLDRFFSAPDAAKHGGKHAPAVKAAIPPALEKKSAVVVAQVPVVDKPPPTKENAVAAPAAKSPEPVAAAAVNEDSITVKAMALVAAEAALDVSELEDDVQFANIGVDSLMSLVIAEKFRETLGVTISGSLFLEYPAVGDLRAWLLEYYG.

The interval 4-227 (NSGSGTSPWG…ALPVYGGLCH (224 aa)) is N-terminal acylcarrier protein transacylase domain (SAT). The 436-residue stretch at 361–796 (QSKIAIVGMS…GGNTTIAIEE (436 aa)) folds into the Ketosynthase family 3 (KS3) domain. Catalysis depends on for beta-ketoacyl synthase activity residues cysteine 534, histidine 670, and histidine 714. The malonyl-CoA:ACP transacylase (MAT) domain stretch occupies residues 898 to 1218 (FAFTGQGASY…LGALHLAGIP (321 aa)). The tract at residues 1286 to 1605 (TSTVHRVIGE…RLLLDRFFSA (320 aa)) is product template (PT) domain. Residues 1290 to 1425 (HRVIGETFDG…ATLFYGKAND (136 aa)) form an N-terminal hotdog fold region. In terms of domain architecture, PKS/mFAS DH spans 1290–1600 (HRVIGETFDG…FRRYPRLLLD (311 aa)). Histidine 1322 acts as the Proton acceptor; for dehydratase activity in catalysis. Positions 1452–1600 (VANRFSRNMA…FRRYPRLLLD (149 aa)) are C-terminal hotdog fold. The Proton donor; for dehydratase activity role is filled by aspartate 1511. The Carrier domain maps to 1671 to 1745 (DSITVKAMAL…DLRAWLLEYY (75 aa)). At serine 1705 the chain carries O-(pantetheine 4'-phosphoryl)serine.

It carries out the reaction holo-[ACP] + 8 malonyl-CoA + 8 H(+) = atrochrysone carboxyl-[ACP] + 8 CO2 + 8 CoA + 2 H2O. It participates in secondary metabolite biosynthesis. Its function is as follows. Non-reducing polyketide synthase; part of the gene cluster that mediates the biosynthesis of pestheic acid, a diphenyl ether which is a biosynthetic precursor of the unique chloropupukeananes. The biosynthesis initiates from condensation of acetate and malonate units catalyzed by the non-reducing PKS ptaA. As the ptaA protein is TE/CLC domain-deficient, hydrolysis and Claisen cyclization of the polyketide could be catalyzed by ptaB containing a beta-lactamase domain. The ptaB protein might hydrolyze the thioester bond between the ACP of ptaA and the intermediate to release atrochrysone carboxylic acid, which is spontaneously dehydrated to form endocrocin anthrone. Endocrocin anthrone is then converted to endocrocin, catalyzed by the anthrone oxygenase ptaC. Spontaneous decarboxylation of endocrocin occurs to generate emodin. An O-methyltransferase (ptaH or ptaI) could methylate emodin to form physcion. PtaJ could then catalyze the oxidative cleavage of physcion, and rotation of the intermediate could then afford desmethylisosulochrin. PtaF, a putative NADH-dependent oxidoreductase, might also participate in the oxidative cleavage step. Desmethylisosulochrin is then transformed by another O-methyltransferase (ptaH or ptaI) to form isosulochrin. Chlorination of isosulochrin by ptaM in the cyclohexadienone B ring then produces chloroisosulochrin. PtaE is responsible for the oxidative coupling reactions of both benzophenones isosulochrin and chloroisosulochrin to RES-1214-1 and pestheic acid respectively, regardless of chlorination. In Pestalotiopsis fici (strain W106-1 / CGMCC3.15140), this protein is Non-reducing polyketide synthase ptaA.